Here is a 425-residue protein sequence, read N- to C-terminus: Amidase 1 (425 aa).

A2 bears the N-acetylalanine mark. Residues K36 and S113 each act as charge relay system in the active site. Residue S137 is the Acyl-ester intermediate of the active site.

This sequence belongs to the amidase family. As to expression, expressed in cotyledons, leaves and flower buds. Lower levels in roots, stems and siliques.

It localises to the cytoplasm. The protein resides in the nucleus. It is found in the nucleoplasm. The enzyme catalyses a monocarboxylic acid amide + H2O = a monocarboxylate + NH4(+). It carries out the reaction indole-3-acetamide + H2O = (indol-3-yl)acetate + NH4(+). It catalyses the reaction 2-phenylacetamide + H2O = 2-phenylacetate + NH4(+). The catalysed reaction is L-asparagine + H2O = L-aspartate + NH4(+). The enzyme catalyses 1-naphthaleneacetamide + H2O = 1-naphthaleneacetate + NH4(+). Its activity is regulated as follows. Inhibited by phenylmethylsulfonyl fluoride (PMSF). Functionally, amidase involved in auxin biosynthesis. Converts indole-3-acetamide to indole-3-acetate. Converts phenyl-2-acetamide (PAM) to phenyl-2-acetate. Substrate preference is PAM &gt; IAM. Can also use L-asparagine and 1-naphtalene-acetamide as substrates, but not indole-3-acetonitrile or indole-3-acetyl-L-aspartic acid. The chain is Amidase 1 from Arabidopsis thaliana (Mouse-ear cress).